Consider the following 525-residue polypeptide: Frizzled-4 (525 aa).

A signal peptide spans 1-24 (MERRGGGGRMLALLLAGLLGGARG). The Extracellular segment spans residues 25 to 200 (FGDEEERRCD…KCGYDAGLYS (176 aa)). An FZ domain is found at 28 to 149 (EEERRCDAIR…NDHNHMCMEG (122 aa)). Disulfide bonds link Cys33/Cys94, Cys41/Cys87, Cys78/Cys116, Cys105/Cys146, Cys109/Cys133, Cys169/Cys188, Cys192/Cys270, and Cys290/Cys365. Asn47 is a glycosylation site (N-linked (GlcNAc...) asparagine). Residue Asn132 is glycosylated (N-linked (GlcNAc...) asparagine). Residues 201–231 (RSAKEFTDIWMAVWASLCFISTAFTVLTFLI) traverse the membrane as a helical segment. At 232-237 (DSSRFS) the chain is on the cytoplasmic side. Residues 238 to 263 (YPERPIIFLSMCYNIYSIAYIVRLTV) traverse the membrane as a helical segment. Residues 264 to 287 (GRERISCDFEEAAEPVLIQEGLKN) are Extracellular-facing. A helical membrane pass occupies residues 288-321 (TGCAIIFLLMYFFGMASSIWWVILTLTWFLAAGL). At 322–324 (KWG) the chain is on the cytoplasmic side. The chain crosses the membrane as a helical span at residues 325–353 (HEAIEMHSSYFHIAAWAIPAVKTIVILIM). Over 354 to 371 (RLVDADELTGLCYVGNQN) the chain is Extracellular. Residues 372–406 (LDALTGFVVAPLFTYLVIGTLFIAAGLVALFKIRS) traverse the membrane as a helical segment. Over 407–419 (NLQKDGTKTDKLE) the chain is Cytoplasmic. The helical transmembrane segment at 420-448 (RLMVKIGVFSVLYTVPATCVIACYFYEIS) threads the bilayer. At 449–461 (NWAVFRYSADDSN) the chain is on the extracellular side. The helical transmembrane segment at 462-483 (MAVEMLKIFMSLLVGITSGMWI) threads the bilayer. Residues 484-525 (WSAKTLHTWQKCSNRLVNSGKVKREKRADGWVKPGKGNETVV) lie on the Cytoplasmic side of the membrane. The short motif at 487–492 (KTLHTW) is the Lys-Thr-X-X-X-Trp motif, mediates interaction with the PDZ domain of Dvl family members element. Residues 523-525 (TVV) carry the PDZ-binding motif.

The protein belongs to the G-protein coupled receptor Fz/Smo family. As to quaternary structure, interacts (via FZ domain) with TSKU; TSKU competes with WNT2B for binding to FZD4, inhibiting Wnt signaling and repressing peripheral eye development. In terms of tissue distribution, expressed in the developing kidney, interdigital spaces and optic cup.

Its subcellular location is the cell membrane. Receptor for Wnt proteins. Most frizzled receptors are coupled to the beta-catenin canonical signaling pathway, which leads to the activation of disheveled proteins, inhibition of GSK-3 kinase, nuclear accumulation of beta-catenin and activation of Wnt target genes. A second signaling pathway involving PKC and calcium fluxes has been seen for some family members, but it is not yet clear if it represents a distinct pathway or if it can be integrated in the canonical pathway, as PKC seems to be required for Wnt-mediated inactivation of GSK-3 kinase. Both pathways seem to involve interactions with G-proteins. May be involved in transduction and intercellular transmission of polarity information during tissue morphogenesis and/or in differentiated tissues. The protein is Frizzled-4 (FZD4) of Gallus gallus (Chicken).